Reading from the N-terminus, the 389-residue chain is Chalcone synthase 5 (389 aa).

Residue Cys-164 is part of the active site.

It belongs to the thiolase-like superfamily. Chalcone/stilbene synthases family.

The enzyme catalyses (E)-4-coumaroyl-CoA + 3 malonyl-CoA + 3 H(+) = 2',4,4',6'-tetrahydroxychalcone + 3 CO2 + 4 CoA. Its pathway is secondary metabolite biosynthesis; flavonoid biosynthesis. The primary product of this enzyme is 4,2',4',6'-tetrahydroxychalcone (also termed naringenin-chalcone or chalcone) which can under specific conditions spontaneously isomerize into naringenin. The protein is Chalcone synthase 5 (CHS5) of Trifolium subterraneum (Subterranean clover).